Consider the following 140-residue polypeptide: ISDra2 transposase TnpA (140 aa).

The Mg(2+) site is built by His67 and His69. The tract at residues 127 to 133 (AQIQKYI) is mobile alpha helix. Tyr132 acts as the Nucleophile in catalysis. Gln136 is a Mg(2+) binding site.

It belongs to the transposase 17 family. Homodimer. It depends on Mg(2+) as a cofactor.

Its activity is regulated as follows. Both the excision and insertion steps are inhibited by TnpB. Functionally, a transposase that is part of insertion sequence (IS) element ISDra2, it is necessary and sufficient for both transposon excision and insertion of ISDra2. This protein alone can be provided in trans and allows transposition of an empty IS element (tnpA or tnpA-tnpB replaced by a selectable marker). ISDra2 binds subterminal imperfect palindromes at the left (LE) and right (RE) ends of the element and cleaves only the 'top strand' which is circularized and subsequently reinserted into the DNA target. This is called a 'peel and paste' mechanism and increases the copy number of the IS. Transposition is linked to DNA replication in the absence of irradiation, with maximal activity when the 'top strand' is on the replication lagging strand, and occurs preferentially on the lagging strand. The IS element inserts 3' of the target sequence 5'-TTGAT-3'; target duplication has not been observed. The polypeptide is ISDra2 transposase TnpA (Deinococcus radiodurans (strain ATCC 13939 / DSM 20539 / JCM 16871 / CCUG 27074 / LMG 4051 / NBRC 15346 / NCIMB 9279 / VKM B-1422 / R1)).